The primary structure comprises 67 residues: UPF0337 protein Atu4724 (67 aa).

Belongs to the UPF0337 (CsbD) family.

This Agrobacterium fabrum (strain C58 / ATCC 33970) (Agrobacterium tumefaciens (strain C58)) protein is UPF0337 protein Atu4724.